Here is a 115-residue protein sequence, read N- to C-terminus: Integration host factor subunit alpha (115 aa).

Belongs to the bacterial histone-like protein family. Heterodimer of an alpha and a beta chain.

Its function is as follows. This protein is one of the two subunits of integration host factor, a specific DNA-binding protein that functions in genetic recombination as well as in transcriptional and translational control. In Burkholderia pseudomallei (strain K96243), this protein is Integration host factor subunit alpha.